The primary structure comprises 431 residues: UDP-N-acetylmuramate--L-alanine ligase (431 aa).

Residue 108–114 coordinates ATP; the sequence is GSHGKTS.

It belongs to the MurCDEF family.

The protein resides in the cytoplasm. The catalysed reaction is UDP-N-acetyl-alpha-D-muramate + L-alanine + ATP = UDP-N-acetyl-alpha-D-muramoyl-L-alanine + ADP + phosphate + H(+). It participates in cell wall biogenesis; peptidoglycan biosynthesis. Functionally, cell wall formation. This chain is UDP-N-acetylmuramate--L-alanine ligase, found in Exiguobacterium sibiricum (strain DSM 17290 / CCUG 55495 / CIP 109462 / JCM 13490 / 255-15).